We begin with the raw amino-acid sequence, 296 residues long: Phosphoribosylaminoimidazole-succinocarboxamide synthase (296 aa).

Belongs to the SAICAR synthetase family.

The enzyme catalyses 5-amino-1-(5-phospho-D-ribosyl)imidazole-4-carboxylate + L-aspartate + ATP = (2S)-2-[5-amino-1-(5-phospho-beta-D-ribosyl)imidazole-4-carboxamido]succinate + ADP + phosphate + 2 H(+). It participates in purine metabolism; IMP biosynthesis via de novo pathway; 5-amino-1-(5-phospho-D-ribosyl)imidazole-4-carboxamide from 5-amino-1-(5-phospho-D-ribosyl)imidazole-4-carboxylate: step 1/2. The protein is Phosphoribosylaminoimidazole-succinocarboxamide synthase of Geotalea uraniireducens (strain Rf4) (Geobacter uraniireducens).